Reading from the N-terminus, the 275-residue chain is Caspase-3 (275 aa).

An N-acetylmethionine modification is found at methionine 1. 2 propeptides span residues 1–9 (MENTENSVD) and 10–28 (SKSI…KSMD). An N6-acetyllysine modification is found at lysine 11. Serine 26 carries the phosphoserine modification. Residues histidine 121 and cysteine 163 contribute to the active site. An S-nitrosocysteine; in inhibited form modification is found at cysteine 163.

The protein belongs to the peptidase C14A family. Heterotetramer that consists of two anti-parallel arranged heterodimers, each one formed by a 17 kDa (p17) and a 12 kDa (p12) subunit. Interacts with BIRC6/bruce. Cleavage by granzyme B, caspase-6, caspase-8 and caspase-10 generates the two active subunits. Additional processing of the propeptides is likely due to the autocatalytic activity of the activated protease. Active heterodimers between the small subunit of caspase-7 protease and the large subunit of caspase-3 also occur and vice versa. Post-translationally, S-nitrosylated on its catalytic site cysteine in unstimulated cell lines and denitrosylated upon activation of the Fas apoptotic pathway, associated with an increase in intracellular caspase activity. Fas therefore activates caspase-3 not only by inducing the cleavage of the caspase zymogen to its active subunits, but also by stimulating the denitrosylation of its active site thiol. In terms of processing, ubiquitinated by BIRC6; this activity is inhibited by DIABLO/SMAC.

Its subcellular location is the cytoplasm. It carries out the reaction Strict requirement for an Asp residue at positions P1 and P4. It has a preferred cleavage sequence of Asp-Xaa-Xaa-Asp-|- with a hydrophobic amino-acid residue at P2 and a hydrophilic amino-acid residue at P3, although Val or Ala are also accepted at this position.. Its activity is regulated as follows. Inhibited by BIRC6; following inhibition of BIRC6-caspase binding by DIABLO/SMAC, BIRC6 is subjected to caspase cleavage, leading to an increase in active caspases. In terms of biological role, involved in the activation cascade of caspases responsible for apoptosis execution. At the onset of apoptosis, it proteolytically cleaves poly(ADP-ribose) polymerase PARP1 at a '216-Asp-|-Gly-217' bond. Cleaves and activates sterol regulatory element binding proteins (SREBPs) between the basic helix-loop-helix leucine zipper domain and the membrane attachment domain. Cleaves and activates caspase-6, -7 and -9 (CASP6, CASP7 and CASP9, respectively). Cleaves and inactivates interleukin-18 (IL18). Triggers cell adhesion in sympathetic neurons through RET cleavage. Cleaves IL-1 beta between an Asp and an Ala, releasing the mature cytokine which is involved in a variety of inflammatory processes. Cleaves and inhibits serine/threonine-protein kinase AKT1 in response to oxidative stress. Acts as an inhibitor of type I interferon production during virus-induced apoptosis by mediating cleavage of antiviral proteins CGAS, IRF3 and MAVS, thereby preventing cytokine overproduction. Also involved in pyroptosis by mediating cleavage and activation of gasdermin-E (GSDME). Cleaves XRCC4 and phospholipid scramblase proteins XKR4, XKR8 and XKR9, leading to promote phosphatidylserine exposure on apoptotic cell surface. Cleaves BIRC6 following inhibition of BIRC6-caspase binding by DIABLO/SMAC. The sequence is that of Caspase-3 (CASP3) from Bos taurus (Bovine).